The following is a 340-amino-acid chain: MATKASLSIKGFALLVSVLVAVPTRVQSIGVCYGMLGNNLPPPSEVVSLYKSNNIARMRLYDPNQAALQALRNSNIQVLLDVPRSDVQSLASNPSAAGDWIRRNVVAYWPSVSFRYIAVGNELIPGSDLAQYILPAMRNIYNALSSAGLQNQIKVSTAVDTGVLGTSYPPSAGAFSSAAQAYLSPIVQFLASNGAPLLVNVYPYFSYTGNPGQISLPYALFTASGVVVQDGRFSYQNLFDAIVDAVFAALERVGGANVAVVVSESGWPSAGGGAEASTSNARTYNQNLIRHVGGGTPRRPGKEIEAYIFEMFNENQKAGGIEQNFGLFYPNKQPVYQISF.

The N-terminal stretch at 1-28 (MATKASLSIKGFALLVSVLVAVPTRVQS) is a signal peptide. The active-site Proton donor is the Glu122. Glu264 serves as the catalytic Nucleophile.

The protein belongs to the glycosyl hydrolase 17 family. Monomer. In terms of tissue distribution, expressed in fruit peel and pulp.

It carries out the reaction Hydrolysis of (1-&gt;3)-beta-D-glucosidic linkages in (1-&gt;3)-beta-D-glucans.. Functionally, possesses beta-1,3-endoglucanase activity in vitro. May play a role in fruit pulp softening process. Can cleave beta-1,6-branched glucans in vitro. The sequence is that of Glucan endo-1,3-beta-glucosidase from Musa acuminata (Banana).